The chain runs to 229 residues: Non-structural protein P8 (229 aa).

The CCM-I stretch occupies residues 14-26 (MKHNQDRVEELSL). Residues 94-116 (IKRHVNEQILPKLKSDLSELKKK) form a CCM-III region. 2 helical membrane passes run 119–139 (IIHT…VCTL) and 162–182 (SLNP…MVCA). Residues 185 to 198 (ERALNQQIDMIKKE) are CCM-II.

The protein belongs to the orbivirus NS3 family. In terms of assembly, forms homooligomers via coiled-coil motif. Interacts with host OPTN; this interaction inhibits innate immune response.

It is found in the host cell membrane. The protein resides in the host Golgi apparatus. Plays a role in the inhibition of host innate immune response. Interacts with host OPTN and thus inhibits the recruitment of TBK1 to the host Golgi apparatus. In turn, downstream partner IRF3 cannot be activated and IFN-beta production is impaired. Its function is as follows. Facilitates viral particle release either by increasing plasma membrane permeability through a viroporin-like activity or by viral budding. The protein is Non-structural protein P8 (Segment-10) of Bluetongue virus 10 (isolate USA) (BTV 10).